The following is a 350-amino-acid chain: Zona pellucida-binding protein 1 (350 aa).

An N-terminal signal peptide occupies residues 1 to 44; that stretch reads MEALAPGRAPRGRRRAGASGSVLSPLSLAAVLLCALLRAPPAVG. Residues asparagine 113, asparagine 186, and asparagine 339 are each glycosylated (N-linked (GlcNAc...) asparagine).

Belongs to the zona pellucida-binding protein Sp38 family. In terms of processing, N-glycosylated. As to expression, expressed in testis (at protein level). Expressed in male germ cells.

Its subcellular location is the cytoplasmic vesicle. It localises to the secretory vesicle. It is found in the acrosome. The protein resides in the acrosome membrane. The protein localises to the secreted. Functionally, plays a role in acrosome compaction and sperm morphogenesis. Is implicated in sperm-oocyte interaction during fertilization. The protein is Zona pellucida-binding protein 1 (Zpbp) of Mus musculus (Mouse).